Consider the following 1045-residue polypeptide: MALVTVQRSPSVAGSCSNSDGESEDDEGNSKGNDRSECFFAGKGTALVLALKDIPPLTQSERRLSTDSTRSSNSTQSNNSDIQLHLQSMFYLLQREDTLKMAVKLESQRSNRTRYLVIASRSCCRSGTSDRRRHRIMRHHSVKVGGSAGTKSSTSPAVPTQRQLSVEQTATEASSKCDKTADKENATAAGDNKNTSGMEESCLLGIDCNERTTIGLVVPILADTTIHLDGDGGFSVKVYEKTHIFKPVSVQAMWSALQTLHKVSKKARENNFYASGPSHDWLSSYERRIESDQSCLNEWNAMDALESRRPPSPDAIRNKPPEKEETESVIKMKLKAIMMSVDLDEVTSKYIRGRLEEILDMDLGEYKSFIDAEMLVILGQMDAPTKIFEHVYLGSEWNASNLEELQKNGVRHILNVTREIDNFFPGTFEYFNVRVYDDEKTNLLKYWDDTFRYITRAKAEGSKVLVHCKMGVSRSASVVIAYAMKAYQWEFQQALEHVKKRRSCIKPNKNFLNQLETYSGMLDAMKNKEKLQRSKSETNLKSTKDARLLPGSEPTPLIQALNQAKSKSTGEAGVTPDGEEEDGSRMHRRSIAQKSQRRMVRRSSSTSPKTQTAVVTKQQSQSMENLTPERSVAEEPKNMRFPGSNGENYSVTQNQVLHIQKHTPLSVRTRIHDLEAHRADQLPQQPVWTSLTKLITQTSHLGKSVSGSSSGNIDSRRDSSCSDVFSSQVDSVFAKDEGEKRQRRKTHSWTESLGPSGGIVLDPTPQQQKQQSNAILRPRGTRQRELPSRHASWGSGDNRCCLPQRTSSGSYYDSNRNTTAIFEGVIQDLKRSSNCNVIEGVAVAVEPIVGVGEGTVKRTKQKLEESTSLKKRCQEESQELLLEAVDAGQRRCPSLYRSASSAHSPRQRQPLRCNSEELMHTSDIENKNTTPGDHEATVVLRVQGQTLADDQRISGNVQILKQNFEAKAGVVGTGGGGGGGTAAGSGSSSTIATSVSAVAGACSANPGKKTTSHQSLPSSPVAQHANHVSAASNSNSSASNSSDSS.

The segment covering 1 to 20 has biased composition (polar residues); it reads MALVTVQRSPSVAGSCSNSD. Disordered regions lie at residues 1 to 35, 58 to 80, 143 to 194, and 306 to 325; these read MALVTVQRSPSVAGSCSNSDGESEDDEGNSKGNDR, TQSERRLSTDSTRSSNSTQSNNS, KVGG…DNKN, and ESRRPPSPDAIRNKPPEKEE. Residues 66 to 80 show a composition bias toward low complexity; it reads TDSTRSSNSTQSNNS. Residues 149 to 174 show a composition bias toward polar residues; it reads GTKSSTSPAVPTQRQLSVEQTATEAS. Residues 175–185 are compositionally biased toward basic and acidic residues; it reads SKCDKTADKEN. The DEK-C domain maps to 324–379; the sequence is EETESVIKMKLKAIMMSVDLDEVTSKYIRGRLEEILDMDLGEYKSFIDAEMLVILG. Residues 383 to 524 enclose the Tyrosine-protein phosphatase domain; the sequence is APTKIFEHVY…LETYSGMLDA (142 aa). C468 functions as the Phosphocysteine intermediate in the catalytic mechanism. Basic and acidic residues predominate over residues 529-547; sequence EKLQRSKSETNLKSTKDAR. Disordered stretches follow at residues 529–631, 699–799, and 1001–1045; these read EKLQ…PERS, SHLG…GDNR, and ACSA…SDSS. Polar residues predominate over residues 560–569; it reads ALNQAKSKST. The segment covering 586–601 has biased composition (basic residues); the sequence is MHRRSIAQKSQRRMVR. Residues 602 to 625 show a composition bias toward polar residues; that stretch reads RSSSTSPKTQTAVVTKQQSQSMEN. Residues 704 to 713 are compositionally biased toward low complexity; that stretch reads SVSGSSSGNI. At S719 the chain carries Phosphoserine. Low complexity predominate over residues 721–732; it reads CSDVFSSQVDSV. Polar residues-rich tracts occupy residues 764-774 and 1008-1021; these read TPQQQKQQSNA and KKTTSHQSLPSSPV. The segment covering 1029–1045 has biased composition (low complexity); the sequence is SAASNSNSSASNSSDSS.

This sequence belongs to the protein-tyrosine phosphatase family. In terms of assembly, interacts with actin.

It is found in the cytoplasm. The protein resides in the cytoskeleton. It carries out the reaction O-phospho-L-tyrosyl-[protein] + H2O = L-tyrosyl-[protein] + phosphate. The enzyme catalyses O-phospho-L-seryl-[protein] + H2O = L-seryl-[protein] + phosphate. It catalyses the reaction O-phospho-L-threonyl-[protein] + H2O = L-threonyl-[protein] + phosphate. Functionally, protein phosphatase which regulates actin filament dynamics. Dephosphorylates and activates the actin binding/depolymerizing factor tsr/cofilin, which subsequently binds to actin filaments and stimulates their disassembly. Required for axon growth. The chain is Protein phosphatase Slingshot (ssh) from Drosophila melanogaster (Fruit fly).